The sequence spans 143 residues: High mobility group protein B (143 aa).

The interval 1-22 is disordered; that stretch reads MSKAASQYATLEDLPSKPKRPQ. A DNA-binding region (HMG box) is located at residues 18–86; sequence PKRPQTGFFI…TYDKQNDQWK (69 aa). Blocked amino end (Ala) is present on alanine 70. 2 stretches are compositionally biased toward basic and acidic residues: residues 100-120 and 131-143; these read AKKALKEKTKKSKAAEKELEK and AKKDDKKAPAKKK. The interval 100–143 is disordered; that stretch reads AKKALKEKTKKSKAAEKELEKSKKKAPAAAPAKKDDKKAPAKKK.

The protein resides in the nucleus. Its subcellular location is the chromosome. This is High mobility group protein B from Tetrahymena thermophila.